A 614-amino-acid chain; its full sequence is Probable glycerol-3-phosphate dehydrogenase (614 aa).

Position 57-85 (57-85) interacts with FAD; sequence DLVVVGGGSTGAGCALDGATRGLKVALVD. A disordered region spans residues 595-614; that stretch reads MECPEEKRHRGERRLPPQEK. The segment covering 598 to 614 has biased composition (basic and acidic residues); the sequence is PEEKRHRGERRLPPQEK.

Belongs to the FAD-dependent glycerol-3-phosphate dehydrogenase family. Requires FAD as cofactor.

It is found in the cytoplasm. It catalyses the reaction a quinone + sn-glycerol 3-phosphate = dihydroxyacetone phosphate + a quinol. Its pathway is polyol metabolism; glycerol degradation via glycerol kinase pathway; glycerone phosphate from sn-glycerol 3-phosphate (anaerobic route): step 1/1. The chain is Probable glycerol-3-phosphate dehydrogenase from Encephalitozoon cuniculi (strain GB-M1) (Microsporidian parasite).